The primary structure comprises 486 residues: tRNA sulfurtransferase (486 aa).

A THUMP domain is found at 63-167 (DAFAERLGCI…HEKLYMVVRR (105 aa)). Residues 185 to 186 (LI), Lys-267, Gly-289, and Gln-298 contribute to the ATP site. Cys-346 and Cys-460 form a disulfide bridge. A Rhodanese domain is found at 408–486 (VDTQEVVIDI…GYTNVKVYRP (79 aa)). Cys-460 (cysteine persulfide intermediate) is an active-site residue.

This sequence belongs to the ThiI family.

The protein resides in the cytoplasm. The enzyme catalyses [ThiI sulfur-carrier protein]-S-sulfanyl-L-cysteine + a uridine in tRNA + 2 reduced [2Fe-2S]-[ferredoxin] + ATP + H(+) = [ThiI sulfur-carrier protein]-L-cysteine + a 4-thiouridine in tRNA + 2 oxidized [2Fe-2S]-[ferredoxin] + AMP + diphosphate. It carries out the reaction [ThiS sulfur-carrier protein]-C-terminal Gly-Gly-AMP + S-sulfanyl-L-cysteinyl-[cysteine desulfurase] + AH2 = [ThiS sulfur-carrier protein]-C-terminal-Gly-aminoethanethioate + L-cysteinyl-[cysteine desulfurase] + A + AMP + 2 H(+). It participates in cofactor biosynthesis; thiamine diphosphate biosynthesis. Functionally, catalyzes the ATP-dependent transfer of a sulfur to tRNA to produce 4-thiouridine in position 8 of tRNAs, which functions as a near-UV photosensor. Also catalyzes the transfer of sulfur to the sulfur carrier protein ThiS, forming ThiS-thiocarboxylate. This is a step in the synthesis of thiazole, in the thiamine biosynthesis pathway. The sulfur is donated as persulfide by IscS. The protein is tRNA sulfurtransferase of Shewanella denitrificans (strain OS217 / ATCC BAA-1090 / DSM 15013).